A 144-amino-acid polypeptide reads, in one-letter code: Flagellar assembly factor FliW (144 aa).

It belongs to the FliW family. As to quaternary structure, interacts with translational regulator CsrA and flagellin(s).

It localises to the cytoplasm. Its function is as follows. Acts as an anti-CsrA protein, binds CsrA and prevents it from repressing translation of its target genes, one of which is flagellin. Binds to flagellin and participates in the assembly of the flagellum. This chain is Flagellar assembly factor FliW, found in Geobacillus kaustophilus (strain HTA426).